We begin with the raw amino-acid sequence, 209 residues long: Large ribosomal subunit protein uL3 (209 aa).

This sequence belongs to the universal ribosomal protein uL3 family. In terms of assembly, part of the 50S ribosomal subunit. Forms a cluster with proteins L14 and L19.

Functionally, one of the primary rRNA binding proteins, it binds directly near the 3'-end of the 23S rRNA, where it nucleates assembly of the 50S subunit. In Clostridium botulinum (strain Okra / Type B1), this protein is Large ribosomal subunit protein uL3.